Here is a 381-residue protein sequence, read N- to C-terminus: Heme A synthase (381 aa).

The next 5 membrane-spanning stretches (helical) occupy residues 25 to 45 (GAVR…VAVG), 112 to 132 (LLGR…WWRG), 138 to 158 (LLLG…IGWI), 176 to 196 (LALH…LAAG), and 212 to 232 (VAGL…LVAG). A heme-binding site is contributed by histidine 277. The next 3 membrane-spanning stretches (helical) occupy residues 279 to 299 (LFAY…VRMA), 307 to 327 (AMGV…TLLL), and 329 to 349 (VPLW…IMAT). Histidine 337 is a binding site for heme.

The protein belongs to the COX15/CtaA family. Type 2 subfamily. As to quaternary structure, interacts with CtaB. Requires heme b as cofactor.

It is found in the cell membrane. The enzyme catalyses Fe(II)-heme o + 2 A + H2O = Fe(II)-heme a + 2 AH2. Its pathway is porphyrin-containing compound metabolism; heme A biosynthesis; heme A from heme O: step 1/1. In terms of biological role, catalyzes the conversion of heme O to heme A by two successive hydroxylations of the methyl group at C8. The first hydroxylation forms heme I, the second hydroxylation results in an unstable dihydroxymethyl group, which spontaneously dehydrates, resulting in the formyl group of heme A. The sequence is that of Heme A synthase from Methylorubrum populi (strain ATCC BAA-705 / NCIMB 13946 / BJ001) (Methylobacterium populi).